The sequence spans 285 residues: CBY1-interacting BAR domain-containing protein 1-B (285 aa).

The transit peptide at 1–48 directs the protein to the mitochondrion; sequence MSQTPEARTRDNQTRQIQESVNNVEKHFGELCQIFAGYVRKTARLRDK. The tract at residues 11–221 is BAR-like; that stretch reads DNQTRQIQES…DIDEEEDLEV (211 aa). A coiled-coil region spans residues 142 to 184; sequence RQIISQAETELQRATMDAARISQQLEETIDNFEKQKIKDIKKL. Residues 241–261 are compositionally biased toward polar residues; the sequence is NSRSGSTSRAPSVISQPPGNR. The disordered stretch occupies residues 241-285; the sequence is NSRSGSTSRAPSVISQPPGNRQKNRMEDDEDGEDDNDENSTEDEN. Residues 267 to 285 are compositionally biased toward acidic residues; sequence EDDEDGEDDNDENSTEDEN.

Belongs to the CIBAR family.

The protein resides in the cytoplasm. Its subcellular location is the cytoskeleton. It is found in the microtubule organizing center. The protein localises to the centrosome. It localises to the centriole. The protein resides in the cell projection. Its subcellular location is the cilium. It is found in the nucleus. The protein localises to the mitochondrion inner membrane. It localises to the flagellum. Functionally, plays a critical role in regulating mitochondrial ultrastructure and function by maintaining the integrity of mitochondrial morphology, particularly the organization of cristae. Plays a crucial role in ciliogenesis. Plays a key role in the correct positioning of the annulus, a septin-based ring structure in the sperm flagellum, serving both as a physical barrier and a membrane diffusion barrier that separates the midpiece (MP) from the principal piece (PP). The chain is CBY1-interacting BAR domain-containing protein 1-B from Xenopus laevis (African clawed frog).